We begin with the raw amino-acid sequence, 119 residues long: Integration host factor subunit alpha (119 aa).

The disordered stretch occupies residues 96–119 (INGQQANGKMNGESAPSEFSAETE).

Belongs to the bacterial histone-like protein family. As to quaternary structure, heterodimer of an alpha and a beta chain.

This protein is one of the two subunits of integration host factor, a specific DNA-binding protein that functions in genetic recombination as well as in transcriptional and translational control. In Bradyrhizobium sp. (strain ORS 278), this protein is Integration host factor subunit alpha.